The following is a 397-amino-acid chain: 2,6-dihydroxypyridine 3-monooxygenase (397 aa).

FAD-binding positions include 14–16 (SIS), 35–36 (ER), Val49, Leu120, Asp306, and 316–320 (AAGGA).

As to quaternary structure, homodimer. FAD serves as cofactor.

The enzyme catalyses 2,6-dihydroxypyridine + NADH + O2 + H(+) = 2,3,6-trihydroxypyridine + NAD(+) + H2O. It participates in alkaloid degradation; nicotine degradation. Catalyzes the conversion of 2,6-dihydroxypyridine into 2,3,6-trihydroxypyridine in the nicotine degradation pathway. The polypeptide is 2,6-dihydroxypyridine 3-monooxygenase (dhpH) (Paenarthrobacter nicotinovorans (Arthrobacter nicotinovorans)).